A 106-amino-acid polypeptide reads, in one-letter code: MMIASKFGIGQQVRHKLLGYLGVVVDVDAEYSLDQPNEDDIASNMTLRSAPWYHVVMEDDEGQPVHTYLAEAQITYELSDEHLDNDSMDELSQSIRNQLQAPRLRN.

Positions Asp-80 to Asn-106 are disordered. The segment covering Glu-90–Gln-100 has biased composition (polar residues).

It belongs to the HspQ family.

The protein resides in the cytoplasm. Functionally, involved in the degradation of certain denaturated proteins, including DnaA, during heat shock stress. The protein is Heat shock protein HspQ of Proteus mirabilis (strain HI4320).